We begin with the raw amino-acid sequence, 462 residues long: Cytochrome c biogenesis protein CcsB (462 aa).

Transmembrane regions (helical) follow at residues 30–50 (LRVA…GTVI), 89–109 (TWWY…CTFR), and 175–195 (IGPI…IWGA).

This sequence belongs to the Ccs1/CcsB family. In terms of assembly, may interact with CcsA.

The protein localises to the cellular thylakoid membrane. Required during biogenesis of c-type cytochromes (cytochrome c6 and cytochrome f) at the step of heme attachment. The sequence is that of Cytochrome c biogenesis protein CcsB from Picosynechococcus sp. (strain ATCC 27264 / PCC 7002 / PR-6) (Agmenellum quadruplicatum).